The following is a 168-amino-acid chain: Crossover junction endodeoxyribonuclease RuvC (168 aa).

Active-site residues include Asp-8, Glu-68, and Asp-140. Asp-8, Glu-68, and Asp-140 together coordinate Mg(2+).

It belongs to the RuvC family. As to quaternary structure, homodimer which binds Holliday junction (HJ) DNA. The HJ becomes 2-fold symmetrical on binding to RuvC with unstacked arms; it has a different conformation from HJ DNA in complex with RuvA. In the full resolvosome a probable DNA-RuvA(4)-RuvB(12)-RuvC(2) complex forms which resolves the HJ. Mg(2+) is required as a cofactor.

Its subcellular location is the cytoplasm. The enzyme catalyses Endonucleolytic cleavage at a junction such as a reciprocal single-stranded crossover between two homologous DNA duplexes (Holliday junction).. In terms of biological role, the RuvA-RuvB-RuvC complex processes Holliday junction (HJ) DNA during genetic recombination and DNA repair. Endonuclease that resolves HJ intermediates. Cleaves cruciform DNA by making single-stranded nicks across the HJ at symmetrical positions within the homologous arms, yielding a 5'-phosphate and a 3'-hydroxyl group; requires a central core of homology in the junction. The consensus cleavage sequence is 5'-(A/T)TT(C/G)-3'. Cleavage occurs on the 3'-side of the TT dinucleotide at the point of strand exchange. HJ branch migration catalyzed by RuvA-RuvB allows RuvC to scan DNA until it finds its consensus sequence, where it cleaves and resolves the cruciform DNA. The sequence is that of Crossover junction endodeoxyribonuclease RuvC from Lawsonia intracellularis (strain PHE/MN1-00).